Here is a 57-residue protein sequence, read N- to C-terminus: COP9 signalosome complex subunit 9 (57 aa).

Belongs to the CSN9 family. Component of the CSN complex, probably composed of cops1, cops2, cops3, cops4, cops5, cops6, cops7, cops8 and cops9.

The protein resides in the nucleus. Its subcellular location is the cytoplasm. The protein localises to the nucleoplasm. In terms of biological role, component of the COP9 signalosome complex (CSN), a complex involved in various cellular and developmental processes. The CSN complex is an essential regulator of the ubiquitin (Ubl) conjugation pathway by mediating the deneddylation of the cullin subunits of SCF-type E3 ligase complexes, leading to decrease the Ubl ligase activity. May play a role in cell proliferation. The sequence is that of COP9 signalosome complex subunit 9 from Xenopus tropicalis (Western clawed frog).